Reading from the N-terminus, the 267-residue chain is MRRIAVMGAAGRMGKTLIEAVQQTSGAGLTAAIDRPDSSLVGADAGELAALGRIGVLLSDDLAKVADEFDVLIDFTHPSVTLKNLAFCRKHGKAMIIGTTGFTVEEKQLLAEAGKDIPIVFAANFSVGVNLSLKLLDMAARVLGDDVDIEIIEAHHRHKVDAPSGTALRMGEVVANALGRDLQEVAVYGREGQTGARDRKTIGFATVRAGDVVGDHTVLFAAEGERLEITHKASSRMTFAKGAVRAALWLDGREPGLYDMQDVLELR.

NAD(+) is bound by residues 8 to 13 (GAAGRM) and aspartate 34. Arginine 35 serves as a coordination point for NADP(+). NAD(+)-binding positions include 98–100 (GTT) and 122–125 (AANF). The Proton donor/acceptor role is filled by histidine 155. Position 156 (histidine 156) interacts with (S)-2,3,4,5-tetrahydrodipicolinate. Catalysis depends on lysine 159, which acts as the Proton donor. 165–166 (GT) is a binding site for (S)-2,3,4,5-tetrahydrodipicolinate.

The protein belongs to the DapB family.

It localises to the cytoplasm. It carries out the reaction (S)-2,3,4,5-tetrahydrodipicolinate + NAD(+) + H2O = (2S,4S)-4-hydroxy-2,3,4,5-tetrahydrodipicolinate + NADH + H(+). The enzyme catalyses (S)-2,3,4,5-tetrahydrodipicolinate + NADP(+) + H2O = (2S,4S)-4-hydroxy-2,3,4,5-tetrahydrodipicolinate + NADPH + H(+). Its pathway is amino-acid biosynthesis; L-lysine biosynthesis via DAP pathway; (S)-tetrahydrodipicolinate from L-aspartate: step 4/4. Functionally, catalyzes the conversion of 4-hydroxy-tetrahydrodipicolinate (HTPA) to tetrahydrodipicolinate. The sequence is that of 4-hydroxy-tetrahydrodipicolinate reductase from Pseudomonas putida (strain ATCC 700007 / DSM 6899 / JCM 31910 / BCRC 17059 / LMG 24140 / F1).